The primary structure comprises 155 residues: Small ribosomal subunit protein uS7c (155 aa).

This sequence belongs to the universal ribosomal protein uS7 family. Part of the 30S ribosomal subunit.

It localises to the plastid. It is found in the chloroplast. Its function is as follows. One of the primary rRNA binding proteins, it binds directly to 16S rRNA where it nucleates assembly of the head domain of the 30S subunit. This is Small ribosomal subunit protein uS7c (rps7) from Marchantia polymorpha (Common liverwort).